The primary structure comprises 372 residues: Glutamate 5-kinase (372 aa).

ATP is bound at residue Lys-14. Substrate contacts are provided by Ser-54, Asp-141, and Asn-153. 173 to 174 contacts ATP; the sequence is TD. A PUA domain is found at 280 to 358; that stretch reads RGTLVLDDGA…DAIEALLGYV (79 aa).

It belongs to the glutamate 5-kinase family.

It localises to the cytoplasm. The catalysed reaction is L-glutamate + ATP = L-glutamyl 5-phosphate + ADP. Its pathway is amino-acid biosynthesis; L-proline biosynthesis; L-glutamate 5-semialdehyde from L-glutamate: step 1/2. Catalyzes the transfer of a phosphate group to glutamate to form L-glutamate 5-phosphate. The chain is Glutamate 5-kinase from Pseudomonas aeruginosa (strain UCBPP-PA14).